A 1295-amino-acid polypeptide reads, in one-letter code: DNA (cytosine-5)-methyltransferase CMT2 (1295 aa).

Disordered stretches follow at residues 1-23 (MLSPAKCESEEAQAPLDLHSSSR), 61-91 (RRSTTLNCNSPEENGGEGRVSQRKSSRGKSQ), and 249-287 (NSSKQSLGSNKRMRRSQRFMKGTENEGEENLGKSKGKGM). Positions 61–72 (RRSTTLNCNSPE) are enriched in polar residues. The region spanning 578 to 693 (HTFSLGDFAY…VEYSTFQTLR (116 aa)) is the BAH domain. Residues 727 to 1268 (LPVLDLYSGC…YSLGMAFRGL (542 aa)) enclose the SAM-dependent MTase C5-type domain. Residues 814–835 (SVNSTKETSGSSSSSDDDSDSE) are disordered. Residues 837-902 (YEVEKLVDIC…SGFKSKILPL (66 aa)) form the Chromo domain. The active site involves Cys915.

The protein belongs to the class I-like SAM-binding methyltransferase superfamily. C5-methyltransferase family.

The protein localises to the nucleus. It catalyses the reaction a 2'-deoxycytidine in DNA + S-adenosyl-L-methionine = a 5-methyl-2'-deoxycytidine in DNA + S-adenosyl-L-homocysteine + H(+). May be involved in the CpXpG methylation and in gene silencing. This is DNA (cytosine-5)-methyltransferase CMT2 (CMT2) from Arabidopsis thaliana (Mouse-ear cress).